A 77-amino-acid polypeptide reads, in one-letter code: Large ribosomal subunit protein eL20 (77 aa).

This sequence belongs to the eukaryotic ribosomal protein eL20 family. As to quaternary structure, part of the 50S ribosomal subunit. Binds 23S rRNA.

In Pyrococcus horikoshii (strain ATCC 700860 / DSM 12428 / JCM 9974 / NBRC 100139 / OT-3), this protein is Large ribosomal subunit protein eL20.